The primary structure comprises 223 residues: MKSAVILLPGLNRDRDMIAALTKITGQAPVTVWQTDTSIPDDVDLILIPGGFSYGDYLRCGAIAARMPVMQAVREKADKGVMVMGVCNGFQILLEAGLLPGALMRNASLKFVCREVKLEVTNANTSFTRGYKPGQIIRCPVAHHDGNYFADAETLKRLEGEGQVVFRYAEGTNPNGSVNDIAGIVNARGNVLGMMPHPENLIEAAHGGDDGRALFAGALGITA.

The Glutamine amidotransferase type-1 domain maps to 3-223; the sequence is SAVILLPGLN…LFAGALGITA (221 aa). C87 acts as the Nucleophile in catalysis. Catalysis depends on residues H197 and E199.

As to quaternary structure, part of the FGAM synthase complex composed of 1 PurL, 1 PurQ and 2 PurS subunits.

It localises to the cytoplasm. It carries out the reaction N(2)-formyl-N(1)-(5-phospho-beta-D-ribosyl)glycinamide + L-glutamine + ATP + H2O = 2-formamido-N(1)-(5-O-phospho-beta-D-ribosyl)acetamidine + L-glutamate + ADP + phosphate + H(+). The enzyme catalyses L-glutamine + H2O = L-glutamate + NH4(+). It functions in the pathway purine metabolism; IMP biosynthesis via de novo pathway; 5-amino-1-(5-phospho-D-ribosyl)imidazole from N(2)-formyl-N(1)-(5-phospho-D-ribosyl)glycinamide: step 1/2. In terms of biological role, part of the phosphoribosylformylglycinamidine synthase complex involved in the purines biosynthetic pathway. Catalyzes the ATP-dependent conversion of formylglycinamide ribonucleotide (FGAR) and glutamine to yield formylglycinamidine ribonucleotide (FGAM) and glutamate. The FGAM synthase complex is composed of three subunits. PurQ produces an ammonia molecule by converting glutamine to glutamate. PurL transfers the ammonia molecule to FGAR to form FGAM in an ATP-dependent manner. PurS interacts with PurQ and PurL and is thought to assist in the transfer of the ammonia molecule from PurQ to PurL. The chain is Phosphoribosylformylglycinamidine synthase subunit PurQ from Brucella suis biovar 1 (strain 1330).